We begin with the raw amino-acid sequence, 324 residues long: MPALPIDQEFDCERFRADIRATAAAIGAPIAHRLTDTVLEAFRDNFAQGATLWKTTSQPGDQLSYRFFSRLKMDTVSRAIDAGLLDAAHPTLAVVDAWSSLYGGAPVQSGDFDAGRGMAKTWLYFGGLRPAEDILTVPALPASVQARLKDFLALGLAHVRFAAVDWRHHSANVYFRGKGPLDTVQFARIHALSGSTPPAAHVVEEVLAYMPEDYCVAITLDLHSGDIERVCFYALKVPKNALPRIPTRIARFLEVAPSHDVEECNVIGWSFGRSGDYVKAERSYTGNMAEILAGWNCFFHGEEGRDHDLRALHQHTESTMGGAR.

Positions 160 and 281 each coordinate substrate.

Belongs to the aromatic prenyltransferase family. In terms of assembly, monomer.

The catalysed reaction is 3-(4-hydroxyphenyl)pyruvate + dimethylallyl diphosphate = 3-dimethylallyl-4-hydroxyphenylpyruvate + diphosphate. Its pathway is antibiotic biosynthesis. Functionally, magnesium-independent aromatic prenyltransferase that catalyzes the irreversible transfer of a dimethylallyl group to 4-hydroxyphenylpyruvate to produce the ring A structure in the clorobiocin biosynthesis pathway. Clorobiocin is an aminocoumarin family antibiotic. This chain is 4-hydroxyphenylpyruvate 3-dimethylallyltransferase, found in Streptomyces roseochromogenus subsp. oscitans.